A 1537-amino-acid chain; its full sequence is DNA-directed RNA polymerase subunit beta' (1537 aa).

4 residues coordinate Zn(2+): Cys57, Cys59, Cys72, and Cys75. Asp746, Asp748, and Asp750 together coordinate Mg(2+). Positions 1120, 1201, 1208, and 1211 each coordinate Zn(2+). Residues 1502–1537 (LEKYGQTSVSTDAVTGSQRYDDTRPSSTSINPSYGD) are disordered. Polar residues-rich tracts occupy residues 1506 to 1519 (GQTS…TGSQ) and 1526 to 1537 (PSSTSINPSYGD).

This sequence belongs to the RNA polymerase beta' chain family. As to quaternary structure, the RNAP catalytic core consists of 2 alpha, 1 beta, 1 beta' and 1 omega subunit. When a sigma factor is associated with the core the holoenzyme is formed, which can initiate transcription. Mg(2+) serves as cofactor. It depends on Zn(2+) as a cofactor.

The enzyme catalyses RNA(n) + a ribonucleoside 5'-triphosphate = RNA(n+1) + diphosphate. DNA-dependent RNA polymerase catalyzes the transcription of DNA into RNA using the four ribonucleoside triphosphates as substrates. The sequence is that of DNA-directed RNA polymerase subunit beta' from Deinococcus geothermalis (strain DSM 11300 / CIP 105573 / AG-3a).